We begin with the raw amino-acid sequence, 400 residues long: Nicotinate phosphoribosyltransferase (400 aa).

Residue histidine 220 is modified to Phosphohistidine; by autocatalysis.

Belongs to the NAPRTase family. In terms of processing, transiently phosphorylated on a His residue during the reaction cycle. Phosphorylation strongly increases the affinity for substrates and increases the rate of nicotinate D-ribonucleotide production. Dephosphorylation regenerates the low-affinity form of the enzyme, leading to product release.

The enzyme catalyses nicotinate + 5-phospho-alpha-D-ribose 1-diphosphate + ATP + H2O = nicotinate beta-D-ribonucleotide + ADP + phosphate + diphosphate. It participates in cofactor biosynthesis; NAD(+) biosynthesis; nicotinate D-ribonucleotide from nicotinate: step 1/1. In terms of biological role, catalyzes the synthesis of beta-nicotinate D-ribonucleotide from nicotinate and 5-phospho-D-ribose 1-phosphate at the expense of ATP. This is Nicotinate phosphoribosyltransferase from Salmonella choleraesuis (strain SC-B67).